A 241-amino-acid polypeptide reads, in one-letter code: Probable histone-lysine N-methyltransferase set-23 (241 aa).

The 61-residue stretch at 25-85 (QGCDCETQCS…SCRNKVVQNG (61 aa)) folds into the Pre-SET domain. Zn(2+) is bound by residues Cys-27, Cys-29, Cys-33, Cys-39, Cys-41, Cys-64, Cys-68, Cys-70, and Cys-77. The 123-residue stretch at 88–210 (KKLKIFSTSE…VGEELSYDYG (123 aa)) folds into the SET domain. Residues 98 to 100 (KGD), Asp-138, Tyr-140, Arg-167, and 170 to 171 (NH) each bind S-adenosyl-L-methionine. Zn(2+) is bound by residues Cys-173, Cys-222, Cys-224, and Cys-229. The Post-SET domain occupies 218–234 (NRKLCLCRSENCRKYLP).

This sequence belongs to the class V-like SAM-binding methyltransferase superfamily. Histone-lysine methyltransferase family. Suvar3-9 subfamily.

The protein resides in the nucleus. The protein localises to the chromosome. The enzyme catalyses L-lysyl-[histone] + S-adenosyl-L-methionine = N(6)-methyl-L-lysyl-[histone] + S-adenosyl-L-homocysteine + H(+). Functionally, probable histone methyltransferase required for embryonic development. This chain is Probable histone-lysine N-methyltransferase set-23, found in Caenorhabditis briggsae.